The sequence spans 147 residues: Transmembrane protein 210 (147 aa).

The first 31 residues, 1 to 31 (MAPCPQPESCPAGSPLGLICLSLLLIPASAG), serve as a signal peptide directing secretion. Residues 32–47 (TYCECSLGLSREALIA) lie on the Extracellular side of the membrane. The helical transmembrane segment at 48 to 68 (LIVVLAGVSASCFCALVVVAI) threads the bilayer. The Cytoplasmic portion of the chain corresponds to 69–147 (GVFRAKGDTC…PPPPPPPLPQ (79 aa)). Positions 128–147 (TMTAPLEPPPPPPPPPPLPQ) are disordered. A compositionally biased stretch (pro residues) spans 133–147 (LEPPPPPPPPPPLPQ).

The protein localises to the membrane. The protein resides in the cytoplasmic vesicle. Its subcellular location is the secretory vesicle. It is found in the acrosome. This is Transmembrane protein 210 (Tmem210) from Mus musculus (Mouse).